The chain runs to 350 residues: MGDDIYIPPKPKPKPKPKPEYKYALWYFKYTNTYEKRFNGTVGDLLNRGFNYAIALEKDEGSGTPESGNLREDGEKDGKEFGEFINSELSGIKYIAQIPYYKRGMLEKLKNASKDKKQMEYYINHIYLVKRTLEYWKGWIDGVIESCDSNLVGFYWNFESPGQVSWGFITDWEIAQLSTYIKQKSNELNRKLEFIWIPYINDIENPDNNDIKRLSKYFDYVFVQPHYYIAWKYWCLWNYEKNVSEDIREYWKYQINRYNGYLTQGITKLIEVLNWIKEIPNGYIEMEVDNKIDEYKYHDLINKACDYIKAREFLTGRDIWQIRAYYFDTNIENVDKVRNGAYGIKGCKNW.

This is an uncharacterized protein from Methanocaldococcus jannaschii (strain ATCC 43067 / DSM 2661 / JAL-1 / JCM 10045 / NBRC 100440) (Methanococcus jannaschii).